A 276-amino-acid polypeptide reads, in one-letter code: UPF0276 protein CV_3513 (276 aa).

The protein belongs to the UPF0276 family.

The chain is UPF0276 protein CV_3513 from Chromobacterium violaceum (strain ATCC 12472 / DSM 30191 / JCM 1249 / CCUG 213 / NBRC 12614 / NCIMB 9131 / NCTC 9757 / MK).